A 162-amino-acid polypeptide reads, in one-letter code: Regulatory protein RecX (162 aa).

This sequence belongs to the RecX family.

It is found in the cytoplasm. Functionally, modulates RecA activity. The protein is Regulatory protein RecX of Xanthomonas axonopodis pv. citri (strain 306).